Consider the following 177-residue polypeptide: Large ribosomal subunit protein uL6 (177 aa).

Belongs to the universal ribosomal protein uL6 family. As to quaternary structure, part of the 50S ribosomal subunit.

In terms of biological role, this protein binds to the 23S rRNA, and is important in its secondary structure. It is located near the subunit interface in the base of the L7/L12 stalk, and near the tRNA binding site of the peptidyltransferase center. This chain is Large ribosomal subunit protein uL6, found in Enterobacter sp. (strain 638).